Consider the following 342-residue polypeptide: Autoinducer 2 import system permease protein LsrC (342 aa).

Over 1 to 13 (MLKFIQNNREITA) the chain is Periplasmic. A helical transmembrane segment spans residues 14 to 34 (LLAVVLLFVLPGFLDRQYLSV). The Cytoplasmic portion of the chain corresponds to 35-38 (QTLT). The helical transmembrane segment at 39–59 (MVYSSAQILILLAMGATLVML) threads the bilayer. Over 60–69 (TRNIDVSVGS) the chain is Periplasmic. Residues 70 to 90 (ITGMCAVLLGMLLNAGYSLPV) form a helical membrane-spanning segment. Over 91–92 (AC) the chain is Cytoplasmic. A helical transmembrane segment spans residues 93 to 113 (VATLLLGLLAGFFNGVLVAWL). Position 114 (lysine 114) is a topological domain, periplasmic. The chain crosses the membrane as a helical span at residues 115–135 (IPAIVATLGTLGLYRGIMLLW). At 136–154 (TGGKWIEGLPAELKQLSAP) the chain is on the cytoplasmic side. Residues 155-175 (LLLGVSAIGWLTIILVAFMAW) form a helical membrane-spanning segment. Topologically, residues 176 to 212 (LLAKTAFGRSFYATGDNLQGARQLGVRTEAIRIVAFS) are periplasmic. Residues 213 to 233 (LNGCMAALAGIVFASQIGFIP) traverse the membrane as a helical segment. Residues 234–251 (NQTGTGLEMKAIAACVLG) are Cytoplasmic-facing. Residues 252–272 (GISLLGGSGAIIGAVLGAWFL) traverse the membrane as a helical segment. The Periplasmic portion of the chain corresponds to 273–283 (TQIDSVLVLLR). The chain crosses the membrane as a helical span at residues 284-304 (IPAWWNDFIAGLVLLAVLVFD). Residues 305 to 342 (GRLRCALERNLRRQKYARFMTPPPSVKPASSGKKREAA) lie on the Cytoplasmic side of the membrane.

Belongs to the binding-protein-dependent transport system permease family. AraH/RbsC subfamily. In terms of assembly, the complex is composed of two ATP-binding proteins (LsrA), two transmembrane proteins (LsrC and LsrD) and a solute-binding protein (LsrB).

The protein resides in the cell inner membrane. Functionally, part of the ABC transporter complex LsrABCD involved in autoinducer 2 (AI-2) import. Probably responsible for the translocation of the substrate across the membrane. The polypeptide is Autoinducer 2 import system permease protein LsrC (lsrC) (Escherichia coli (strain K12 / DH10B)).